The sequence spans 418 residues: MTPSNRGTLARTAMAYVLAGGRGSRLYELTDPRAKPAVYFGGKTRIIDFALSNAINSGIRRIGVATQYKAHSLIRHLQRGWNFMRPERNESFDILPASQRVSETQWYDGTADAVYQNGDIIADYAPEYMVILAGDHVYKMDYELMLQQHVNQNADVTVGVLEVPQREASGFGVMHVDANDRIITFLEKPDDPPGIPGAPHLSLASMGIYVFRTTYLFELLRADAADPHSSHDFGKDIIPTVVRHGKAIAHRFSTSCVRSQDESLAYWRDVGTIDAYWEANIDLTTVTPQLDLFDKDWPIWTYSELTAPAKFVHNEEGRRGHALNSLVSGGCIVSGSYLHKSLLFTGVRVHSYSHLEGAVVQPYVDIGRAARLRNVVVDRGVRIPAGLVVGEDPVLDARRFRRSARGTVLITQPMIDRL.

Residues Tyr107, Gly172, 187 to 188 (EK), and Ser205 contribute to the alpha-D-glucose 1-phosphate site.

This sequence belongs to the bacterial/plant glucose-1-phosphate adenylyltransferase family. As to quaternary structure, homotetramer.

It catalyses the reaction alpha-D-glucose 1-phosphate + ATP + H(+) = ADP-alpha-D-glucose + diphosphate. It functions in the pathway glycan biosynthesis; glycogen biosynthesis. In terms of biological role, involved in the biosynthesis of ADP-glucose, a building block required for the elongation reactions to produce glycogen. Catalyzes the reaction between ATP and alpha-D-glucose 1-phosphate (G1P) to produce pyrophosphate and ADP-Glc. The chain is Glucose-1-phosphate adenylyltransferase from Gemmatimonas aurantiaca (strain DSM 14586 / JCM 11422 / NBRC 100505 / T-27).